The sequence spans 258 residues: Deoxyribose-phosphate aldolase (258 aa).

Catalysis depends on aspartate 102, which acts as the Proton donor/acceptor. The active-site Schiff-base intermediate with acetaldehyde is lysine 165. Catalysis depends on lysine 199, which acts as the Proton donor/acceptor.

It belongs to the DeoC/FbaB aldolase family. DeoC type 2 subfamily.

Its subcellular location is the cytoplasm. The catalysed reaction is 2-deoxy-D-ribose 5-phosphate = D-glyceraldehyde 3-phosphate + acetaldehyde. It functions in the pathway carbohydrate degradation; 2-deoxy-D-ribose 1-phosphate degradation; D-glyceraldehyde 3-phosphate and acetaldehyde from 2-deoxy-alpha-D-ribose 1-phosphate: step 2/2. Catalyzes a reversible aldol reaction between acetaldehyde and D-glyceraldehyde 3-phosphate to generate 2-deoxy-D-ribose 5-phosphate. The polypeptide is Deoxyribose-phosphate aldolase (Vibrio vulnificus (strain CMCP6)).